We begin with the raw amino-acid sequence, 324 residues long: Glyoxylate/hydroxypyruvate reductase B (324 aa).

Residues arginine 237 and glutamate 266 contribute to the active site. Histidine 285 (proton donor) is an active-site residue.

The protein belongs to the D-isomer specific 2-hydroxyacid dehydrogenase family. GhrB subfamily. Homodimer.

It localises to the cytoplasm. The catalysed reaction is glycolate + NADP(+) = glyoxylate + NADPH + H(+). It carries out the reaction (R)-glycerate + NAD(+) = 3-hydroxypyruvate + NADH + H(+). The enzyme catalyses (R)-glycerate + NADP(+) = 3-hydroxypyruvate + NADPH + H(+). Its function is as follows. Catalyzes the NADPH-dependent reduction of glyoxylate and hydroxypyruvate into glycolate and glycerate, respectively. The chain is Glyoxylate/hydroxypyruvate reductase B from Shigella dysenteriae serotype 1 (strain Sd197).